A 545-amino-acid polypeptide reads, in one-letter code: Endo-beta-N-acetylglucosaminidase (545 aa).

A signal peptide spans 1–36 (MTFIKQMMPRYVASMTAGIVAAAMAATCAFAPVANA). In terms of domain architecture, GH18 spans 51–333 (RHFMVYYRAW…EDLRRIVPSN (283 aa)). The active-site Proton donor is the E184. The interval 486–511 (PVPTPDSTDQNGNRDKVTNHKVQGQP) is disordered. The chain crosses the membrane as a helical span at residues 518-538 (GISTDIIVAVGVTLAIAGVAL).

The protein belongs to the glycosyl hydrolase 18 family.

It localises to the cell membrane. The catalysed reaction is an N(4)-(oligosaccharide-(1-&gt;3)-[oligosaccharide-(1-&gt;6)]-beta-D-Man-(1-&gt;4)-beta-D-GlcNAc-(1-&gt;4)-alpha-D-GlcNAc)-L-asparaginyl-[protein] + H2O = an oligosaccharide-(1-&gt;3)-[oligosaccharide-(1-&gt;6)]-beta-D-Man-(1-&gt;4)-D-GlcNAc + N(4)-(N-acetyl-beta-D-glucosaminyl)-L-asparaginyl-[protein]. Functionally, endoglycosidase with broad specificity that cleaves the chitobiose core of high mannose and complex N-linked glycans. Is able to release N-glycans from diverse host glycoproteins such as human and bovine lactoferrin, immunoglobulins A and G, and ribonuclease B. Is active directly on human breast milk - a complex matrix of lipids, oligosaccharides, and proteins with disparate glycosylation types - successfully removing a significant proportion of the total amount of N-glycans. Does not recognize O-linked glycans or free human milk oligosaccharides (HMO). In Bifidobacterium longum subsp. infantis (strain ATCC 15697 / DSM 20088 / JCM 1222 / NCTC 11817 / S12), this protein is Endo-beta-N-acetylglucosaminidase.